Here is a 341-residue protein sequence, read N- to C-terminus: Phosphoribosylformylglycinamidine cyclo-ligase (341 aa).

This sequence belongs to the AIR synthase family.

Its subcellular location is the cytoplasm. The catalysed reaction is 2-formamido-N(1)-(5-O-phospho-beta-D-ribosyl)acetamidine + ATP = 5-amino-1-(5-phospho-beta-D-ribosyl)imidazole + ADP + phosphate + H(+). It participates in purine metabolism; IMP biosynthesis via de novo pathway; 5-amino-1-(5-phospho-D-ribosyl)imidazole from N(2)-formyl-N(1)-(5-phospho-D-ribosyl)glycinamide: step 2/2. This is Phosphoribosylformylglycinamidine cyclo-ligase from Lachnoclostridium phytofermentans (strain ATCC 700394 / DSM 18823 / ISDg) (Clostridium phytofermentans).